Reading from the N-terminus, the 321-residue chain is tRNA 2-thiolation protein NcsA (321 aa).

Lys-204 is covalently cross-linked (Glycyl lysine isopeptide (Lys-Gly) (interchain with G-Cter in SAMP2)).

Belongs to the TtcA family. CTU1/NCS6/ATPBD3 subfamily. Interacts with monomeric and polymeric forms of SAMP2. Interacts with UbaA. Interacts with archaeal EF-1-alpha and Pan1. Non-sampylated protein forms a complex with archaeal CPSF1 of approximately 100 kDa. Sampylated at Lys-204 with the archaeal ubiquitin-like protein SAMP2. Polymeric chains of SAMP2 are also linked.

Its pathway is tRNA modification; 5-methoxycarbonylmethyl-2-thiouridine-tRNA biosynthesis. Its function is as follows. Required for thiolation of mcm(5)S(2)U at the wobble uridine position of tRNA specific for lysine (tRNA(Lys)). Probably acts by catalyzing adenylation of tRNA, an intermediate required for 2-thiolation. May also act as a sulfurtransferase that transfers sulfur from thiocarboxylated SAMP2 onto the uridine of tRNA at wobble position. Required for cell growth at elevated temperatures. The protein is tRNA 2-thiolation protein NcsA of Haloferax volcanii (strain ATCC 29605 / DSM 3757 / JCM 8879 / NBRC 14742 / NCIMB 2012 / VKM B-1768 / DS2) (Halobacterium volcanii).